Consider the following 273-residue polypeptide: Type III pantothenate kinase (273 aa).

5–12 (DVGNSHVV) is an ATP binding site. A substrate-binding site is contributed by 112 to 115 (GTDL). Residue Asp114 is the Proton acceptor of the active site. Position 134 (Asp134) interacts with K(+). Residue Thr137 participates in ATP binding. Thr189 contacts substrate.

Belongs to the type III pantothenate kinase family. As to quaternary structure, homodimer. The cofactor is NH4(+). It depends on K(+) as a cofactor.

Its subcellular location is the cytoplasm. It catalyses the reaction (R)-pantothenate + ATP = (R)-4'-phosphopantothenate + ADP + H(+). It functions in the pathway cofactor biosynthesis; coenzyme A biosynthesis; CoA from (R)-pantothenate: step 1/5. Its function is as follows. Catalyzes the phosphorylation of pantothenate (Pan), the first step in CoA biosynthesis. This chain is Type III pantothenate kinase, found in Treponema pallidum (strain Nichols).